The chain runs to 324 residues: uncharacterized protein (324 aa).

It to the C-terminal of para-aminobenzoate synthase component I.

This is an uncharacterized protein from Pasteurella multocida (strain Pm70).